A 323-amino-acid chain; its full sequence is tRNA U34 carboxymethyltransferase (323 aa).

Carboxy-S-adenosyl-L-methionine contacts are provided by residues Lys-91, Trp-105, Lys-110, Gly-130, 152–154, 181–182, Met-196, Tyr-200, and Arg-315; these read DPT and IE.

The protein belongs to the class I-like SAM-binding methyltransferase superfamily. CmoB family. As to quaternary structure, homotetramer.

It carries out the reaction carboxy-S-adenosyl-L-methionine + 5-hydroxyuridine(34) in tRNA = 5-carboxymethoxyuridine(34) in tRNA + S-adenosyl-L-homocysteine + H(+). Functionally, catalyzes carboxymethyl transfer from carboxy-S-adenosyl-L-methionine (Cx-SAM) to 5-hydroxyuridine (ho5U) to form 5-carboxymethoxyuridine (cmo5U) at position 34 in tRNAs. This is tRNA U34 carboxymethyltransferase from Cronobacter sakazakii (strain ATCC BAA-894) (Enterobacter sakazakii).